The sequence spans 659 residues: Interferon-induced GTP-binding protein Mx2 (659 aa).

A Dynamin-type G domain is found at 65–338; it reads DLALPAIAVI…LISHICKSLP (274 aa). Residues 75-82 form a G1 motif region; sequence GDQSSGKS. 75 to 82 serves as a coordination point for GTP; the sequence is GDQSSGKS. Positions 100 to 102 are G2 motif; sequence VTR. The segment at 176–179 is G3 motif; that stretch reads DLPG. Residues 176-180 and 245-248 contribute to the GTP site; these read DLPGI and TKPD. The interval 245–248 is G4 motif; sequence TKPD. The G5 motif stretch occupies residues 277–280; sequence KCRG. The disordered stretch occupies residues 547 to 567; it reads EAEEEERKHGKSRSSQSKNLQ. A GED domain is found at 571-659; that stretch reads MDEIFQHLNA…AQRRLAKFPG (89 aa).

This sequence belongs to the TRAFAC class dynamin-like GTPase superfamily. Dynamin/Fzo/YdjA family.

The protein resides in the cytoplasm. Its function is as follows. Interferon-induced dynamin-like GTPase with antiviral activity against vesicular stomatitis virus (VSV). This chain is Interferon-induced GTP-binding protein Mx2 (Mx2), found in Rattus norvegicus (Rat).